Here is a 198-residue protein sequence, read N- to C-terminus: Syndecan-4 (198 aa).

The first 18 residues, Met1–Ala18, serve as a signal peptide directing secretion. The Extracellular segment spans residues Glu19–Glu145. 3 O-linked (Xyl...) (glycosaminoglycan) serine glycosylation sites follow: Ser39, Ser61, and Ser63. Ser95 carries an O-linked (Xyl...) (chondroitin sulfate) serine glycan. A helical transmembrane segment spans residues Val146–Tyr170. The Cytoplasmic portion of the chain corresponds to Arg171–Ala198.

Belongs to the syndecan proteoglycan family. As to quaternary structure, homodimer. Interacts with CDCP1 and SDCBP. Interacts (via its cytoplasmic domain) with GIPC (via its PDZ domain). Interacts (via its cytoplasmic domain) with NUDT16L1. Interacts with DNM2; this interaction is markedly enhanced at focal ahesion site upon induction of focal adhesions and stress-fiber formation. Post-translationally, shedding is enhanced by a number of factors such as heparanase, thrombin or EGF. Also by stress and wound healing. PMA-mediated shedding is inhibited by TIMP3. In terms of processing, O-glycosylated; contains both chondroitin sulfate and heparan sulfate. Ser-39, Ser-61 and Ser-63 can all be modified by either chondroitin sulfate or heparan sulfate, and the protein exists in forms that contain only chondroitin sulfate, only heparan sulfate and both chondroitin sulfate and heparan sulfate.

It localises to the membrane. It is found in the secreted. In terms of biological role, cell surface proteoglycan which regulates exosome biogenesis in concert with SDCBP and PDCD6IP. The polypeptide is Syndecan-4 (Pongo abelii (Sumatran orangutan)).